Consider the following 369-residue polypeptide: O-methyltransferase 12 (369 aa).

Residues Gly-181, Asp-204, 229 to 231 (GDF), Asp-230, Phe-231, and Lys-244 each bind S-adenosyl-L-methionine. The active-site Proton acceptor is His-248.

This sequence belongs to the class I-like SAM-binding methyltransferase superfamily. Cation-independent O-methyltransferase family. COMT subfamily.

It carries out the reaction resorcinol + S-adenosyl-L-methionine = 3-methoxyphenol + S-adenosyl-L-homocysteine + H(+). Its function is as follows. S-adenosyl-L-methionine dependent O-methyltransferase that may be involved in modifying resorcinol ring to synthesize a variant of 4-methyl-5-pentylbenzene-1,3-diol. The protein is O-methyltransferase 12 (omt12) of Dictyostelium discoideum (Social amoeba).